We begin with the raw amino-acid sequence, 587 residues long: Phosphatidylinositol-3-phosphatase SAC1 (587 aa).

Residues 1–520 lie on the Cytoplasmic side of the membrane; sequence MAATAYEHLK…SPLSVPRDWK (520 aa). Residues 122 to 451 form the SAC domain; it reads LNHVLSTDGF…ANACAKQYAG (330 aa). The essential for phosphatidylinositol-4-phosphate phosphatase activity stretch occupies residues 452–587; the sequence is TGALKTDFTR…PRLVQKEKID (136 aa). The residue at position 456 (Lys-456) is an N6-acetyllysine. Residues 521–541 traverse the membrane as a helical segment; it reads FLALPIIMVVAFSMCIICLLM. Over 542–548 the chain is Lumenal; the sequence is AGDTWTE. A helical membrane pass occupies residues 549–569; that stretch reads TLAYVLFWGVASIGTFFIILY. Topologically, residues 570–587 are cytoplasmic; that stretch reads NGKDFVDAPRLVQKEKID.

In terms of assembly, interacts with TMEM39A. Interacts with SEC23A and SEC24A; this interaction is reduced in the absence of TMEM39A. Interacts with PLEKHA3 and VAPA and/or VAPB to form a ternary complex. Detected in spleen, lung, liver, skeletal muscle, kidney, testis and in cerebellar Purkinje cells (at protein level). Ubiquitous. Highly expressed in brain, spleen, liver and kidney.

The protein localises to the endoplasmic reticulum membrane. The protein resides in the golgi apparatus membrane. It carries out the reaction a 1,2-diacyl-sn-glycero-3-phospho-(1D-myo-inositol-3-phosphate) + H2O = a 1,2-diacyl-sn-glycero-3-phospho-(1D-myo-inositol) + phosphate. It catalyses the reaction a 1,2-diacyl-sn-glycero-3-phospho-(1D-myo-inositol 4-phosphate) + H2O = a 1,2-diacyl-sn-glycero-3-phospho-(1D-myo-inositol) + phosphate. Its function is as follows. Phosphoinositide phosphatase which catalyzes the hydrolysis of phosphatidylinositol 4-phosphate (PtdIns(4)P), phosphatidylinositol 3-phosphate (PtdIns(3)P) and has low activity towards phosphatidylinositol-3,5-bisphosphate (PtdIns(3,5)P2). Shows a very robust PtdIns(4)P phosphatase activity when it binds PtdIns(4)P in a 'cis' configuration in the cellular environment, with much less activity seen when it binds PtdIns(4)P in 'trans' configuration. PtdIns(4)P phosphatase activity (when it binds PtdIns(4)P in 'trans' configuration) is enhanced in the presence of PLEKHA3. This chain is Phosphatidylinositol-3-phosphatase SAC1 (Sacm1l), found in Rattus norvegicus (Rat).